The following is a 400-amino-acid chain: 1-deoxy-D-xylulose 5-phosphate reductoisomerase (400 aa).

Residues threonine 10, glycine 11, serine 12, isoleucine 13, glycine 36, asparagine 38, and asparagine 124 each coordinate NADPH. Residue lysine 125 participates in 1-deoxy-D-xylulose 5-phosphate binding. NADPH is bound at residue glutamate 126. Aspartate 150 is a Mn(2+) binding site. Residues serine 151, glutamate 152, serine 186, and histidine 209 each contribute to the 1-deoxy-D-xylulose 5-phosphate site. Glutamate 152 is a Mn(2+) binding site. NADPH is bound at residue glycine 215. The 1-deoxy-D-xylulose 5-phosphate site is built by serine 222, asparagine 227, lysine 228, and glutamate 231. A Mn(2+)-binding site is contributed by glutamate 231.

Belongs to the DXR family. The cofactor is Mg(2+). Mn(2+) serves as cofactor.

It carries out the reaction 2-C-methyl-D-erythritol 4-phosphate + NADP(+) = 1-deoxy-D-xylulose 5-phosphate + NADPH + H(+). The protein operates within isoprenoid biosynthesis; isopentenyl diphosphate biosynthesis via DXP pathway; isopentenyl diphosphate from 1-deoxy-D-xylulose 5-phosphate: step 1/6. Its function is as follows. Catalyzes the NADPH-dependent rearrangement and reduction of 1-deoxy-D-xylulose-5-phosphate (DXP) to 2-C-methyl-D-erythritol 4-phosphate (MEP). This chain is 1-deoxy-D-xylulose 5-phosphate reductoisomerase, found in Aliivibrio salmonicida (strain LFI1238) (Vibrio salmonicida (strain LFI1238)).